The sequence spans 306 residues: Methionyl-tRNA formyltransferase (306 aa).

Position 110 to 113 (110 to 113 (SLLP)) interacts with (6S)-5,6,7,8-tetrahydrofolate.

It belongs to the Fmt family.

The enzyme catalyses L-methionyl-tRNA(fMet) + (6R)-10-formyltetrahydrofolate = N-formyl-L-methionyl-tRNA(fMet) + (6S)-5,6,7,8-tetrahydrofolate + H(+). Attaches a formyl group to the free amino group of methionyl-tRNA(fMet). The formyl group appears to play a dual role in the initiator identity of N-formylmethionyl-tRNA by promoting its recognition by IF2 and preventing the misappropriation of this tRNA by the elongation apparatus. The polypeptide is Methionyl-tRNA formyltransferase (Brucella ovis (strain ATCC 25840 / 63/290 / NCTC 10512)).